Here is a 601-residue protein sequence, read N- to C-terminus: Ubiquitin carboxyl-terminal hydrolase MINDY-2 (601 aa).

Positions 1-205 (MENSPDSPQP…LCKEEEEDPA (205 aa)) are disordered. A compositionally biased stretch (basic and acidic residues) spans 24-34 (EGRRRGGREAE). T62 is subject to Phosphothreonine. At S82 the chain carries Phosphoserine. Low complexity-rich tracts occupy residues 127–141 (EEPSSTGAPSSSCSE), 148–169 (SPSLDSLESFSNLHSFPSSSEF), and 186–195 (GAAGPPRAAP). C244 (nucleophile) is an active-site residue. The active-site Proton acceptor is H426. The segment at 485–537 (GQQDQIDQDYLMALSLQQEQQSQEINWEQIPEGISDLELAKKLQEEEDRRASQ) is ubiquitin-binding domain (UBD). Residues 534 to 601 (RASQYYQEQE…EKEKNSCVIL (68 aa)) are disordered. The segment covering 536–570 (SQYYQEQEQAQAVVTTTTPSTQAQQGQPAQASPSS) has biased composition (low complexity). Basic and acidic residues predominate over residues 577-601 (SERKRKEPREKDKEKEKEKNSCVIL).

It belongs to the MINDY deubiquitinase family. FAM63 subfamily.

The catalysed reaction is Thiol-dependent hydrolysis of ester, thioester, amide, peptide and isopeptide bonds formed by the C-terminal Gly of ubiquitin (a 76-residue protein attached to proteins as an intracellular targeting signal).. Hydrolase that can remove 'Lys-48'-linked conjugated ubiquitin from proteins. Can also bind to polyubiquitin chains of different linkage types, including 'Lys-6', 'Lys-11', 'Lys-29', 'Lys-33' and 'Lys-63'. May play a regulatory role at the level of protein turnover. In Mus musculus (Mouse), this protein is Ubiquitin carboxyl-terminal hydrolase MINDY-2 (Mindy2).